We begin with the raw amino-acid sequence, 451 residues long: Ammonium transporter Rh type B (451 aa).

Residues 1-11 (MADVSTSMRLK) are Cytoplasmic-facing. The helical transmembrane segment at 12-32 (LPVVCFILEIILIILFGALVQ) threads the bilayer. The Extracellular segment spans residues 33–63 (YDYETDAKEWHNQSHNDYENDFYFRYPSFQD). Asn44 carries N-linked (GlcNAc...) asparagine glycosylation. Residues 64 to 84 (VHVMIFIGFGFLMTFLQKYGF) traverse the membrane as a helical segment. The Cytoplasmic segment spans residues 85-87 (GSV). Residues 88 to 108 (GFNFLIAAFSLQWATLMQGFF) form a helical membrane-spanning segment. Over 109 to 121 (HGMHGGKIHVGVE) the chain is Extracellular. A helical membrane pass occupies residues 122–142 (SMINADFCTGSVLISFGAVLG). Topologically, residues 143 to 151 (KTSPIQLLT) are cytoplasmic. Residues 152–172 (MAMFEVTLFAVNEFILLSLLG) form a helical membrane-spanning segment. Over 173–176 (TRDA) the chain is Extracellular. Residues 177–197 (GGSMTIHTFGAYFGLMVTRIL) form a helical membrane-spanning segment. Over 198–216 (YRPHLDKSKHRNSSVYHSD) the chain is Cytoplasmic. Residues 217 to 237 (LFAMIGTIYLWMFWPSFNSAI) traverse the membrane as a helical segment. Topologically, residues 238 to 247 (TAHGDDQHRT) are extracellular. The chain crosses the membrane as a helical span at residues 248–270 (ALNTYYSLAACTLATYGMSAVTS). Topologically, residues 271 to 274 (HDGK) are cytoplasmic. A helical transmembrane segment spans residues 275-295 (LDMVHIQNAALAGGVAVGTAG). Residues 296–298 (EMM) lie on the Extracellular side of the membrane. Residues 299–319 (LTPFGSMIVGFLAGIISVLGF) traverse the membrane as a helical segment. The Cytoplasmic portion of the chain corresponds to 320 to 340 (KFLSPILESKLKIQDTCGVHN). Residues 341 to 361 (LHGMPGVLGAIVGAVTAALAT) traverse the membrane as a helical segment. The Extracellular portion of the chain corresponds to 362-390 (MDVYGKGMEDVFPAVADGSIDASKQGGVQ). A helical transmembrane segment spans residues 391–411 (ALSLAITLGIALLGGLIVVFG). Residues 412 to 451 (TPPDTLCFEDGVYWEVPESEAPHEAQLTTVRTEETEKLSS) are Cytoplasmic-facing.

It belongs to the ammonium transporter (TC 2.A.49) family. Rh subfamily.

It localises to the basolateral cell membrane. It is found in the cytoplasmic vesicle membrane. Functions as an ammonia transporter. May play a role in the elimination of ammonia in the gill. The sequence is that of Ammonium transporter Rh type B (rhbg) from Tetraodon nigroviridis (Spotted green pufferfish).